The sequence spans 262 residues: 7alpha-hydroxysteroid dehydrogenase (262 aa).

Residues 13–18, arginine 38, 63–64, and asparagine 90 each bind NADP(+); these read SSTRGI and NA. Taurochenodeoxycholate-binding residues include threonine 145 and tyrosine 158. Residues tyrosine 158, lysine 162, and 191–195 contribute to the NADP(+) site; that span reads IGTRA. The Proton acceptor role is filled by tyrosine 158.

It belongs to the short-chain dehydrogenases/reductases (SDR) family. In terms of assembly, homotetramer. A dynamic equilibrium between dimers and tetramers seems to exist.

The enzyme catalyses cholate + NADP(+) = 3alpha,12alpha-dihydroxy-7-oxo-5beta-cholanate + NADPH + H(+). The catalysed reaction is chenodeoxycholate + NADP(+) = 7-oxolithocholate + NADPH + H(+). It catalyses the reaction 3alpha,7alpha-dihydroxy-12-oxo-5beta-cholanate + NADP(+) = 7,12-dioxo-lithocholate + NADPH + H(+). It carries out the reaction 7alpha-hydroxy-3,12-dioxo-5beta-cholanate + NADP(+) = dehydrocholate + NADPH + H(+). The enzyme catalyses glycochenodeoxycholate + NADP(+) = 7-oxoglycolithocholate + NADPH + H(+). The catalysed reaction is taurochenodeoxycholate + NADP(+) = 7-oxotaurolithocholate + NADPH + H(+). Activated by metal ions such as Mg(2+), Na(+) and K(+). 7alpha-hydroxysteroid dehydrogenase that catalyzes the NADP(+)-dependent oxidation of the 7alpha-hydroxy group of 7alpha-hydroxysteroids, such as cholate, chenodeoxycholate, glycochenodeoxycholate and taurochenodeoxycholate, to the corresponding 7-oxosteroids. Is also able to catalyze the reverse reduction reactions. Together with 7beta-HSDH encoded in the adjacent gene, is likely involved in the epimerization of the hydroxy group at C-7 of primary bile acids through 7-keto bile acid intermediates. The sequence is that of 7alpha-hydroxysteroid dehydrogenase from Clostridium sardiniense (Clostridium absonum).